The following is a 93-amino-acid chain: Small ribosomal subunit protein uS17 (93 aa).

Belongs to the universal ribosomal protein uS17 family. In terms of assembly, part of the 30S ribosomal subunit.

In terms of biological role, one of the primary rRNA binding proteins, it binds specifically to the 5'-end of 16S ribosomal RNA. The sequence is that of Small ribosomal subunit protein uS17 from Bordetella bronchiseptica (strain ATCC BAA-588 / NCTC 13252 / RB50) (Alcaligenes bronchisepticus).